The following is a 113-amino-acid chain: Eukaryotic translation initiation factor 1b (113 aa).

At S2 the chain carries N-acetylserine. S9 is modified (phosphoserine).

The protein belongs to the SUI1 family.

Its function is as follows. Probably involved in translation. In Homo sapiens (Human), this protein is Eukaryotic translation initiation factor 1b (EIF1B).